The sequence spans 294 residues: NAD kinase (294 aa).

The active-site Proton acceptor is Asp74. NAD(+)-binding positions include 74-75, Lys79, 149-150, Asp179, 190-195, and Ala214; these read DG, NE, and TGYSLS.

This sequence belongs to the NAD kinase family. The cofactor is a divalent metal cation.

Its subcellular location is the cytoplasm. It carries out the reaction NAD(+) + ATP = ADP + NADP(+) + H(+). Its function is as follows. Involved in the regulation of the intracellular balance of NAD and NADP, and is a key enzyme in the biosynthesis of NADP. Catalyzes specifically the phosphorylation on 2'-hydroxyl of the adenosine moiety of NAD to yield NADP. The protein is NAD kinase of Christiangramia forsetii (strain DSM 17595 / CGMCC 1.15422 / KT0803) (Gramella forsetii).